The primary structure comprises 82 residues: RNA-binding protein Hfq (82 aa).

The Sm domain occupies 9–68 (DPFLNTLRKEHVPVSIYLVNGIKLQGKVDSFDQYVIMLKNTVSQMVYKHAISTIVPGRPV).

Belongs to the Hfq family. As to quaternary structure, homohexamer.

In terms of biological role, RNA chaperone that binds small regulatory RNA (sRNAs) and mRNAs to facilitate mRNA translational regulation in response to envelope stress, environmental stress and changes in metabolite concentrations. Also binds with high specificity to tRNAs. The polypeptide is RNA-binding protein Hfq (Methylococcus capsulatus (strain ATCC 33009 / NCIMB 11132 / Bath)).